Here is a 93-residue protein sequence, read N- to C-terminus: Class I hydrophobin SSP1 (93 aa).

A signal peptide spans 1-26; sequence MKYITAISMLATAALTAATPLNGVEA. Disulfide bonds link C39-C71, C47-C65, C48-C56, and C72-C89.

Belongs to the fungal hydrophobin family. As to quaternary structure, self-assembles to form functional amyloid fibrils called rodlets. Self-assembly into fibrillar rodlets occurs spontaneously at hydrophobic:hydrophilic interfaces and the rodlets further associate laterally to form amphipathic monolayers.

It is found in the secreted. Its subcellular location is the cell wall. In terms of biological role, aerial growth, conidiation, and dispersal of filamentous fungi in the environment rely upon a capability of their secreting small amphipathic proteins called hydrophobins (HPBs) with low sequence identity. Class I can self-assemble into an outermost layer of rodlet bundles on aerial cell surfaces, conferring cellular hydrophobicity that supports fungal growth, development and dispersal; whereas Class II form highly ordered films at water-air interfaces through intermolecular interactions but contribute nothing to the rodlet structure. SSP1 is a class I hydrophobin that acts as an effector in the ericoid mycorrhizal interaction with Vaccinium myrtillus. May enhance attachment of the fungus to the root surface and protect the fungal hypha from plant defense compounds. In Oidiodendron maius (strain Zn), this protein is Class I hydrophobin SSP1.